Here is a 1243-residue protein sequence, read N- to C-terminus: DNA polymerase II large subunit (1243 aa).

This sequence belongs to the archaeal DNA polymerase II family. Heterodimer of a large subunit and a small subunit.

It carries out the reaction DNA(n) + a 2'-deoxyribonucleoside 5'-triphosphate = DNA(n+1) + diphosphate. The catalysed reaction is Exonucleolytic cleavage in the 3'- to 5'-direction to yield nucleoside 5'-phosphates.. Its function is as follows. Possesses two activities: a DNA synthesis (polymerase) and an exonucleolytic activity that degrades single-stranded DNA in the 3'- to 5'-direction. Has a template-primer preference which is characteristic of a replicative DNA polymerase. This chain is DNA polymerase II large subunit, found in Nanoarchaeum equitans (strain Kin4-M).